The chain runs to 1305 residues: ABC transporter FPSE_09185 (1305 aa).

The N-linked (GlcNAc...) asparagine glycan is linked to Asn28. 6 consecutive transmembrane segments (helical) span residues 44–64 (FCVY…MPLM), 99–119 (LYIV…KFCF), 172–192 (RLGT…VAFT), 199–219 (IVSA…VPIY), 277–297 (IIGA…GLAF), and 312–332 (VGVV…FSYL). Positions 48 to 348 (VVGALASIGV…ISQAMVAATE (301 aa)) constitute an ABC transmembrane type-1 1 domain. One can recognise an ABC transporter 1 domain in the interval 372-663 (LIFKDVTFEY…ENGVYYSLVE (292 aa)). Residue 407 to 414 (GPSGSGKS) coordinates ATP. The disordered stretch occupies residues 434–454 (EAATPRSSKEGERDNHDERKY). Residues 440-454 (SSKEGERDNHDERKY) show a composition bias toward basic and acidic residues. N-linked (GlcNAc...) asparagine glycosylation is found at Asn468, Asn507, and Asn525. 6 helical membrane passes run 737 to 757 (FLLI…QAWL), 780 to 800 (GFMW…QCWI), 851 to 873 (GVFG…CLII), 877 to 899 (FGWK…SGFW), 964 to 984 (AVIF…ILWY), and 999 to 1019 (FMVS…ILGV). The ABC transmembrane type-1 2 domain maps to 738–1025 (LLITIASMGV…ILGVAPSAAQ (288 aa)). The interval 1038 to 1057 (DSNRSSQEAEKSGPTVEDTD) is disordered. 3 N-linked (GlcNAc...) asparagine glycosylation sites follow: Asn1040, Asn1066, and Asn1075. The 239-residue stretch at 1062–1300 (IELCNVSFKY…RGIYWDMCQT (239 aa)) folds into the ABC transporter 2 domain. ATP is bound at residue 1096-1103 (GPSGCGKT). A glycan (N-linked (GlcNAc...) asparagine) is linked at Asn1125.

Belongs to the ABC transporter superfamily. ABCB family. Multidrug resistance exporter (TC 3.A.1.201) subfamily.

The protein resides in the membrane. In terms of biological role, ABC transporter; part of the gene cluster that mediates the biosynthesis of the lipopeptides W493 A and B. W493 A and B consist of six amino acid residues D-allo-thr, L-Ala, D-Ala, L-Gln, D-Tyr, and L-Val/L-Ile linked to a 3-hydroxy-4-methyltetradecanoic acid polyketide chain. May be involved in excretion or internal transport of W493 A and B. This Fusarium pseudograminearum (strain CS3096) (Wheat and barley crown-rot fungus) protein is ABC transporter FPSE_09185.